Reading from the N-terminus, the 340-residue chain is Mitotic checkpoint protein BUB3.1 (340 aa).

The segment at 1–20 (MTTVTPSAGRELSNPPSDGI) is disordered. WD repeat units follow at residues 15–54 (PPSD…LKGE), 96–135 (THDK…GPER), 142–179 (LQPE…QPEQ), 239–278 (DIVY…RLYQ), and 281–324 (KYPT…RSVN).

It belongs to the WD repeat BUB3 family. In terms of assembly, part of the mitotic checkpoint complex (MCC); interacts with CDC20-1 and CDC20-2. Interacts with MAD2 and BUBR1. In terms of tissue distribution, expressed in actively dividing tissues, early in organ development, in young leaves, lateral root primordia and root meristems, flower buds, flowers and siliques.

It localises to the nucleus. The protein localises to the chromosome. Its subcellular location is the centromere. The protein resides in the kinetochore. It is found in the cytoplasm. It localises to the cytoskeleton. The protein localises to the phragmoplast. Its subcellular location is the spindle. In terms of biological role, has a dual function in spindle-assembly checkpoint signaling and in promoting the establishment of correct kinetochore-microtubule (K-MT) attachments. Promotes the formation of stable end-on bipolar attachments. Necessary for kinetochore localization of BUB1. The BUB1/BUB3 complex plays a role in the inhibition of anaphase-promoting complex or cyclosome (APC/C) when spindle-assembly checkpoint is activated and inhibits the ubiquitin ligase activity of APC/C by phosphorylating its activator CDC20. Essential for gametophyte development. The sequence is that of Mitotic checkpoint protein BUB3.1 (BUB3.1) from Arabidopsis thaliana (Mouse-ear cress).